Reading from the N-terminus, the 428-residue chain is Pyruvate dehydrogenase E1 component subunit alpha-3, chloroplastic (428 aa).

Residues 1–61 (MATAFAPTKL…NATRRSPVVS (61 aa)) constitute a chloroplast transit peptide. Residues His-115, Tyr-141, Arg-142, Ala-190, Ile-192, Asp-227, Gly-228, and Asn-256 each contribute to the pyruvate site. Thiamine diphosphate contacts are provided by Tyr-141, Arg-142, Ala-190, Ile-192, Asp-227, Gly-228, Asn-256, and His-325. Mg(2+) is bound at residue Asp-227. A Mg(2+)-binding site is contributed by Asn-256.

In terms of assembly, tetramer of 2 alpha and 2 beta subunits. Requires thiamine diphosphate as cofactor. Mg(2+) serves as cofactor.

Its subcellular location is the plastid. It is found in the chloroplast. It carries out the reaction N(6)-[(R)-lipoyl]-L-lysyl-[protein] + pyruvate + H(+) = N(6)-[(R)-S(8)-acetyldihydrolipoyl]-L-lysyl-[protein] + CO2. Functionally, the pyruvate dehydrogenase complex catalyzes the overall conversion of pyruvate to acetyl-CoA and CO(2). It contains multiple copies of three enzymatic components: pyruvate dehydrogenase (E1), dihydrolipoamide acetyltransferase (E2) and lipoamide dehydrogenase (E3). The protein is Pyruvate dehydrogenase E1 component subunit alpha-3, chloroplastic (PDH-E1 ALPHA) of Arabidopsis thaliana (Mouse-ear cress).